A 130-amino-acid polypeptide reads, in one-letter code: Small ribosomal subunit protein uS9 (130 aa).

A disordered region spans residues 98-130 (LKRAGFLTRDARKKERKKYGQPGARKRFQYSKR). A compositionally biased stretch (basic residues) spans 111–130 (KERKKYGQPGARKRFQYSKR).

This sequence belongs to the universal ribosomal protein uS9 family.

The protein is Small ribosomal subunit protein uS9 of Sorangium cellulosum (strain So ce56) (Polyangium cellulosum (strain So ce56)).